Reading from the N-terminus, the 240-residue chain is Ribonuclease PH (240 aa).

Residues Arg-86 and 124-126 (GTR) contribute to the phosphate site.

This sequence belongs to the RNase PH family. Homohexameric ring arranged as a trimer of dimers.

The catalysed reaction is tRNA(n+1) + phosphate = tRNA(n) + a ribonucleoside 5'-diphosphate. Its function is as follows. Phosphorolytic 3'-5' exoribonuclease that plays an important role in tRNA 3'-end maturation. Removes nucleotide residues following the 3'-CCA terminus of tRNAs; can also add nucleotides to the ends of RNA molecules by using nucleoside diphosphates as substrates, but this may not be physiologically important. Probably plays a role in initiation of 16S rRNA degradation (leading to ribosome degradation) during starvation. This is Ribonuclease PH from Rhodospirillum rubrum (strain ATCC 11170 / ATH 1.1.1 / DSM 467 / LMG 4362 / NCIMB 8255 / S1).